Consider the following 146-residue polypeptide: 1,4-dihydroxy-2-naphthoyl-CoA hydrolase (146 aa).

Aspartate 15 is a catalytic residue.

Belongs to the 4-hydroxybenzoyl-CoA thioesterase family. DHNA-CoA hydrolase subfamily.

It catalyses the reaction 1,4-dihydroxy-2-naphthoyl-CoA + H2O = 1,4-dihydroxy-2-naphthoate + CoA + H(+). Its pathway is cofactor biosynthesis; phylloquinone biosynthesis. It participates in quinol/quinone metabolism; 1,4-dihydroxy-2-naphthoate biosynthesis; 1,4-dihydroxy-2-naphthoate from chorismate: step 7/7. Catalyzes the hydrolysis of 1,4-dihydroxy-2-naphthoyl-CoA (DHNA-CoA) to 1,4-dihydroxy-2-naphthoate (DHNA), a reaction involved in phylloquinone (vitamin K1) biosynthesis. The protein is 1,4-dihydroxy-2-naphthoyl-CoA hydrolase of Picosynechococcus sp. (strain ATCC 27264 / PCC 7002 / PR-6) (Agmenellum quadruplicatum).